Reading from the N-terminus, the 269-residue chain is DNA-binding protein RFXANK (269 aa).

Residues 1-36 (MEPTQVAENLVPNQQPPVPDLEDPEDTRDESPENSD) are disordered. ANK repeat units lie at residues 88 to 127 (LDSLSIHQLAAQGELSQLKDHLRKGACPACTCLSGNNLIN), 132 to 161 (RGFTPLIWASAFGEIETVRFLLDWGADPHI), 165 to 194 (ERESALSLASMGGYTDIVRLLLDRDVDINI), 198 to 227 (NGGTPLLYAVRGNHVKCVEALLARGADLTT), and 231 to 260 (SGYTPMDLAVALGYRKVQQVMESHILRLFQ).

In terms of assembly, forms homodimers. The RFX heterotetrameric complex consists of 2 molecules of RFX5 and one each of RFXAP and RFX-B/RFXANK; with each subunit representing a separate complementation group. Interacts (via ankyrin repeats) with RFX5 (via PxLPxI/L motif); the interaction is direct. RFX forms cooperative DNA binding complexes with X2BP and CBF/NF-Y. RFX associates with CIITA to form an active transcriptional complex. Interacts with RAF1. Interacts with RFX7. Phosphorylated by RAF1. In terms of tissue distribution, expressed primarily in thymus, lung and testis.

It localises to the cytoplasm. The protein resides in the nucleus. Activates transcription from class II MHC promoters. Activation requires the activity of the MHC class II transactivator/CIITA. May regulate other genes in the cell. RFX binds the X1 box of MHC-II promoters. May also potentiate the activation of RAF1. The protein is DNA-binding protein RFXANK (Rfxank) of Mus musculus (Mouse).